The sequence spans 215 residues: Cytochrome b6 (215 aa).

The chain crosses the membrane as a helical span at residues 32-52 (IFYCLGGITLVCFLIQFATGF). C35 contacts heme c. Heme b-binding residues include H86 and H100. The next 3 membrane-spanning stretches (helical) occupy residues 90-110 (ASMM…TGGF), 116-136 (LTWV…VTGY), and 186-206 (LHTF…FLMI). Residues H187 and H202 each contribute to the heme b site.

The protein belongs to the cytochrome b family. PetB subfamily. In terms of assembly, the 4 large subunits of the cytochrome b6-f complex are cytochrome b6, subunit IV (17 kDa polypeptide, PetD), cytochrome f and the Rieske protein, while the 4 small subunits are PetG, PetL, PetM and PetN. The complex functions as a dimer. Heme b serves as cofactor. Heme c is required as a cofactor.

The protein localises to the cellular thylakoid membrane. Functionally, component of the cytochrome b6-f complex, which mediates electron transfer between photosystem II (PSII) and photosystem I (PSI), cyclic electron flow around PSI, and state transitions. This is Cytochrome b6 from Synechococcus sp. (strain JA-3-3Ab) (Cyanobacteria bacterium Yellowstone A-Prime).